Reading from the N-terminus, the 872-residue chain is Alanine--tRNA ligase (872 aa).

Positions 567, 571, 669, and 673 each coordinate Zn(2+).

The protein belongs to the class-II aminoacyl-tRNA synthetase family. It depends on Zn(2+) as a cofactor.

Its subcellular location is the cytoplasm. It carries out the reaction tRNA(Ala) + L-alanine + ATP = L-alanyl-tRNA(Ala) + AMP + diphosphate. Functionally, catalyzes the attachment of alanine to tRNA(Ala) in a two-step reaction: alanine is first activated by ATP to form Ala-AMP and then transferred to the acceptor end of tRNA(Ala). Also edits incorrectly charged Ser-tRNA(Ala) and Gly-tRNA(Ala) via its editing domain. The protein is Alanine--tRNA ligase of Streptococcus pyogenes serotype M3 (strain ATCC BAA-595 / MGAS315).